The sequence spans 23 residues: Thylakoid lumenal 17.4 kDa protein (23 aa).

The tract at residues 1-23 (ANQRLPPLSNDPDRCERAFVGNT) is disordered.

It localises to the plastid. The protein resides in the chloroplast thylakoid lumen. The polypeptide is Thylakoid lumenal 17.4 kDa protein (Spinacia oleracea (Spinach)).